We begin with the raw amino-acid sequence, 242 residues long: ATP synthase subunit a (242 aa).

6 consecutive transmembrane segments (helical) span residues 29 to 49 (SSIY…LAFY), 84 to 104 (FIPL…LGMT), 114 to 134 (IIVT…VGFI), 140 to 160 (FLTL…MIVI), 181 to 201 (MAGH…MIYL), and 203 to 223 (FLPI…AILQ).

This sequence belongs to the ATPase A chain family. In terms of assembly, F-type ATPases have 2 components, CF(1) - the catalytic core - and CF(0) - the membrane proton channel. CF(1) has five subunits: alpha(3), beta(3), gamma(1), delta(1), epsilon(1). CF(0) has three main subunits: a(1), b(2) and c(9-12). The alpha and beta chains form an alternating ring which encloses part of the gamma chain. CF(1) is attached to CF(0) by a central stalk formed by the gamma and epsilon chains, while a peripheral stalk is formed by the delta and b chains.

Its subcellular location is the cell inner membrane. In terms of biological role, key component of the proton channel; it plays a direct role in the translocation of protons across the membrane. This chain is ATP synthase subunit a, found in Rickettsia typhi (strain ATCC VR-144 / Wilmington).